The following is a 362-amino-acid chain: UDP-N-acetylglucosamine--N-acetylmuramyl-(pentapeptide) pyrophosphoryl-undecaprenol N-acetylglucosamine transferase (362 aa).

UDP-N-acetyl-alpha-D-glucosamine is bound by residues 15-17, N127, R165, S191, I247, 266-271, and Q292; these read TGG and ALTVSE.

Belongs to the glycosyltransferase 28 family. MurG subfamily.

The protein resides in the cell inner membrane. It catalyses the reaction di-trans,octa-cis-undecaprenyl diphospho-N-acetyl-alpha-D-muramoyl-L-alanyl-D-glutamyl-meso-2,6-diaminopimeloyl-D-alanyl-D-alanine + UDP-N-acetyl-alpha-D-glucosamine = di-trans,octa-cis-undecaprenyl diphospho-[N-acetyl-alpha-D-glucosaminyl-(1-&gt;4)]-N-acetyl-alpha-D-muramoyl-L-alanyl-D-glutamyl-meso-2,6-diaminopimeloyl-D-alanyl-D-alanine + UDP + H(+). It functions in the pathway cell wall biogenesis; peptidoglycan biosynthesis. In terms of biological role, cell wall formation. Catalyzes the transfer of a GlcNAc subunit on undecaprenyl-pyrophosphoryl-MurNAc-pentapeptide (lipid intermediate I) to form undecaprenyl-pyrophosphoryl-MurNAc-(pentapeptide)GlcNAc (lipid intermediate II). In Shewanella sp. (strain MR-4), this protein is UDP-N-acetylglucosamine--N-acetylmuramyl-(pentapeptide) pyrophosphoryl-undecaprenol N-acetylglucosamine transferase.